Here is a 189-residue protein sequence, read N- to C-terminus: 3-isopropylmalate dehydratase small subunit (189 aa).

This sequence belongs to the LeuD family. LeuD type 1 subfamily. As to quaternary structure, heterodimer of LeuC and LeuD.

It catalyses the reaction (2R,3S)-3-isopropylmalate = (2S)-2-isopropylmalate. It participates in amino-acid biosynthesis; L-leucine biosynthesis; L-leucine from 3-methyl-2-oxobutanoate: step 2/4. Catalyzes the isomerization between 2-isopropylmalate and 3-isopropylmalate, via the formation of 2-isopropylmaleate. The sequence is that of 3-isopropylmalate dehydratase small subunit from Francisella tularensis subsp. holarctica (strain FTNF002-00 / FTA).